Consider the following 240-residue polypeptide: MQKQRFCIDTTAITDTEVRSSLGVDGISESTKIMLDLIADSRVNLGISCHIPYPSVYDELIGFLKRENCPKETIIKVDTWLVKKTPNRYEIKLPAELLYEYIRDIRERINKGMRIGENAMYESASVSYLSIKGCNSNQNDNTKNTKNVDTNATHKEHTDEVLSKTVKSFRNKYRTALRTGTLDSAPDLDVLLLAKELDAAVVASDEGIEKWAQRLGLRFVKAKDFPFILKEYLNTYGNKI.

Belongs to the HARP family.

The catalysed reaction is Endonucleolytic cleavage of RNA, removing 5'-extranucleotides from tRNA precursor.. Functionally, RNA-free RNase P that catalyzes the removal of the 5'-leader sequence from pre-tRNA to produce the mature 5'-terminus. This Methanococcus aeolicus (strain ATCC BAA-1280 / DSM 17508 / OCM 812 / Nankai-3) protein is RNA-free ribonuclease P.